We begin with the raw amino-acid sequence, 475 residues long: Sulfate adenylyltransferase subunit 1 (475 aa).

Residues 25–239 (KSLLRFLTCG…EVLETVEIQR (215 aa)) form the tr-type G domain. A G1 region spans residues 34-41 (GSVDDGKS). 34-41 (GSVDDGKS) contacts GTP. Residues 92–96 (GITID) are G2. Positions 113-116 (DTPG) are G3. GTP-binding positions include 113–117 (DTPGH) and 168–171 (NKMD). The interval 168-171 (NKMD) is G4. The G5 stretch occupies residues 206 to 208 (SAL).

This sequence belongs to the TRAFAC class translation factor GTPase superfamily. Classic translation factor GTPase family. CysN/NodQ subfamily. As to quaternary structure, heterodimer composed of CysD, the smaller subunit, and CysN.

It carries out the reaction sulfate + ATP + H(+) = adenosine 5'-phosphosulfate + diphosphate. The protein operates within sulfur metabolism; hydrogen sulfide biosynthesis; sulfite from sulfate: step 1/3. Its function is as follows. With CysD forms the ATP sulfurylase (ATPS) that catalyzes the adenylation of sulfate producing adenosine 5'-phosphosulfate (APS) and diphosphate, the first enzymatic step in sulfur assimilation pathway. APS synthesis involves the formation of a high-energy phosphoric-sulfuric acid anhydride bond driven by GTP hydrolysis by CysN coupled to ATP hydrolysis by CysD. The chain is Sulfate adenylyltransferase subunit 1 from Escherichia coli O157:H7.